The following is a 208-amino-acid chain: FMN-dependent NADH:quinone oxidoreductase 4 (208 aa).

The protein belongs to the azoreductase type 1 family. As to quaternary structure, homodimer. It depends on FMN as a cofactor.

It catalyses the reaction 2 a quinone + NADH + H(+) = 2 a 1,4-benzosemiquinone + NAD(+). It carries out the reaction N,N-dimethyl-1,4-phenylenediamine + anthranilate + 2 NAD(+) = 2-(4-dimethylaminophenyl)diazenylbenzoate + 2 NADH + 2 H(+). Quinone reductase that provides resistance to thiol-specific stress caused by electrophilic quinones. Functionally, also exhibits azoreductase activity. Catalyzes the reductive cleavage of the azo bond in aromatic azo compounds to the corresponding amines. This is FMN-dependent NADH:quinone oxidoreductase 4 from Bacillus cereus (strain ZK / E33L).